A 678-amino-acid polypeptide reads, in one-letter code: NADPH--cytochrome P450 reductase (678 aa).

Gly2 bears the N-acetylglycine mark. Residues 2-22 (GDSHEDTSATMPEAVAEEVSL) lie on the Lumenal side of the membrane. Residues 23 to 43 (FSTTDMVLFSLIVGVLTYWFI) traverse the membrane as a helical segment. Residues 44 to 678 (FRKKKEEIPE…KGRYSLDVWS (635 aa)) are Cytoplasmic-facing. Residues 80–224 (IIVFYGSQTG…DFITWREQFW (145 aa)) enclose the Flavodoxin-like domain. FMN-binding positions include 86–91 (SQTGTA), 138–141 (ATYG), 173–182 (LGNKTYEHFN), and Asp208. Positions 279 to 521 (KNPFLAAVTA…FVRKSQFRLP (243 aa)) constitute an FAD-binding FR-type domain. NADP(+) is bound at residue Arg298. FAD contacts are provided by residues Arg424, 454-457 (RYYS), 472-474 (CAV), Tyr478, and 488-491 (GVAT). NADP(+) contacts are provided by residues Thr535, 596 to 597 (SR), 602 to 606 (KVYVQ), and Asp639. Trp677 provides a ligand contact to FAD.

It belongs to the NADPH--cytochrome P450 reductase family. The protein in the N-terminal section; belongs to the flavodoxin family. This sequence in the C-terminal section; belongs to the flavoprotein pyridine nucleotide cytochrome reductase family. Requires FAD as cofactor. FMN is required as a cofactor.

It localises to the endoplasmic reticulum membrane. It carries out the reaction 2 oxidized [cytochrome P450] + NADPH = 2 reduced [cytochrome P450] + NADP(+) + H(+). Its function is as follows. This enzyme is required for electron transfer from NADP to cytochrome P450 in microsomes. It can also provide electron transfer to heme oxygenase and cytochrome B5. This Rattus norvegicus (Rat) protein is NADPH--cytochrome P450 reductase.